The following is a 438-amino-acid chain: Minor myo-inositol transporter IolF (438 aa).

A run of 12 helical transmembrane segments spans residues 15–35, 49–69, 86–106, 108–128, 147–167, 171–191, 230–250, 268–288, 295–312, 317–334, 359–379, and 387–407; these read IAAA…SAGL, IGLL…ALLG, MLVY…PMLL, GYII…TIIA, WAAG…LGLL, IVFA…IRLP, ILFL…MGFF, LLQM…FMPF, TVFG…TLFL, GLPI…NNGA, LMFF…PMII, and MAAI…LFAP.

This sequence belongs to the major facilitator superfamily. Sugar transporter (TC 2.A.1.1) family.

The protein resides in the cell membrane. It functions in the pathway polyol metabolism; myo-inositol degradation into acetyl-CoA. In terms of biological role, minor myo-inositol uptake transporter. The sequence is that of Minor myo-inositol transporter IolF (iolF) from Bacillus subtilis (strain 168).